We begin with the raw amino-acid sequence, 391 residues long: Lipid-A-disaccharide synthase (391 aa).

This sequence belongs to the LpxB family.

It carries out the reaction a lipid X + a UDP-2-N,3-O-bis[(3R)-3-hydroxyacyl]-alpha-D-glucosamine = a lipid A disaccharide + UDP + H(+). It participates in bacterial outer membrane biogenesis; LPS lipid A biosynthesis. Condensation of UDP-2,3-diacylglucosamine and 2,3-diacylglucosamine-1-phosphate to form lipid A disaccharide, a precursor of lipid A, a phosphorylated glycolipid that anchors the lipopolysaccharide to the outer membrane of the cell. The protein is Lipid-A-disaccharide synthase of Aromatoleum aromaticum (strain DSM 19018 / LMG 30748 / EbN1) (Azoarcus sp. (strain EbN1)).